We begin with the raw amino-acid sequence, 176 residues long: Shikimate kinase (176 aa).

12 to 17 contributes to the ATP binding site; the sequence is GSGKST. Ser-16 is a Mg(2+) binding site. Substrate contacts are provided by Asp-34, Arg-58, and Gly-80. Residue Arg-117 coordinates ATP. Arg-136 is a substrate binding site. ATP is bound at residue Arg-153.

This sequence belongs to the shikimate kinase family. As to quaternary structure, monomer. Requires Mg(2+) as cofactor.

The protein resides in the cytoplasm. It carries out the reaction shikimate + ATP = 3-phosphoshikimate + ADP + H(+). Its pathway is metabolic intermediate biosynthesis; chorismate biosynthesis; chorismate from D-erythrose 4-phosphate and phosphoenolpyruvate: step 5/7. Functionally, catalyzes the specific phosphorylation of the 3-hydroxyl group of shikimic acid using ATP as a cosubstrate. The chain is Shikimate kinase from Mycobacterium bovis (strain ATCC BAA-935 / AF2122/97).